The primary structure comprises 180 residues: Acireductone dioxygenase (180 aa).

H97, H99, E103, and H141 together coordinate Fe(2+). Ni(2+) contacts are provided by H97, H99, E103, and H141.

The protein belongs to the acireductone dioxygenase (ARD) family. As to quaternary structure, monomer. Fe(2+) is required as a cofactor. Ni(2+) serves as cofactor.

The enzyme catalyses 1,2-dihydroxy-5-(methylsulfanyl)pent-1-en-3-one + O2 = 3-(methylsulfanyl)propanoate + CO + formate + 2 H(+). It carries out the reaction 1,2-dihydroxy-5-(methylsulfanyl)pent-1-en-3-one + O2 = 4-methylsulfanyl-2-oxobutanoate + formate + 2 H(+). The protein operates within amino-acid biosynthesis; L-methionine biosynthesis via salvage pathway; L-methionine from S-methyl-5-thio-alpha-D-ribose 1-phosphate: step 5/6. Catalyzes 2 different reactions between oxygen and the acireductone 1,2-dihydroxy-3-keto-5-methylthiopentene (DHK-MTPene) depending upon the metal bound in the active site. Fe-containing acireductone dioxygenase (Fe-ARD) produces formate and 2-keto-4-methylthiobutyrate (KMTB), the alpha-ketoacid precursor of methionine in the methionine recycle pathway. Ni-containing acireductone dioxygenase (Ni-ARD) produces methylthiopropionate, carbon monoxide and formate, and does not lie on the methionine recycle pathway. The sequence is that of Acireductone dioxygenase from Enterobacter sp. (strain 638).